A 930-amino-acid polypeptide reads, in one-letter code: Nonribosomal peptide synthetase btyA (930 aa).

The segment at 31–440 (ESPHRLTYAE…RGRSKELICI (410 aa)) is adenylation (A) domain. Residues 570–647 (PAGNETETLL…VLARQLQDGH (78 aa)) form the Carrier domain. S607 is subject to O-(pantetheine 4'-phosphoryl)serine. Residues 667–920 (PLWLIHPIGG…EDNVHKVYRV (254 aa)) are thioesterase (TE) domain.

Belongs to the NRP synthetase family.

It catalyses the reaction 2 3-(4-hydroxyphenyl)pyruvate + H(+) = (2S)-2-(4-hydoxybenzyl)-3-(4-hydroxyphenyl)-2-furonol carboxylate + H2O. It participates in secondary metabolite biosynthesis. In terms of biological role, nonribosomal peptide synthetase; part of the gene cluster that mediates the biosynthesis of butyrolactones, natural products that show a wide range of biological activities such as antitumor, antiparasitic or anti-inflammatory activity. The nonribosomal peptide synthetase btyA is responsible for the production of butyrolactone II, the core structure of butyrolactones. BtyA first activates 4-hydroxyphenylpyruvate (HPPA) through its A domain to AMP-HPPA. The HPPA unit is then loaded to the T domain and eventually transferred to the TE domain. Upon loading of another HPPA unit to the T domain, the TE domain promotes the enolate formation on the unit attached. Then aldol condensation establishes the carbon-carbon bond between the two units, followed by ester cyclization, and keto-enol tautomerization to yield the gamma-butyrolactone core. Hydrolysis, and finally esterification of the exposed carboxylic acid group yields butyrolactone II. Two additional enzymes, a prenyltransferase and an epoxidase, may be involved in the tailoring modifications of butyrolactone II to give butyrolactone III and butyrolactone I. This chain is Nonribosomal peptide synthetase btyA, found in Aspergillus terreus (strain NIH 2624 / FGSC A1156).